A 266-amino-acid polypeptide reads, in one-letter code: Chymotrypsin-like elastase family member 1 (266 aa).

The first 16 residues, Met1–Ser16, serve as a signal peptide directing secretion. A propeptide spans Thr17–Arg26 (activation peptide). Positions Val27–Ala264 constitute a Peptidase S1 domain. Cys56 and Cys72 are joined by a disulfide. His71 (charge relay system) is an active-site residue. 4 residues coordinate Ca(2+): Glu85, Asn87, Gln90, and Glu95. N-linked (GlcNAc...) asparagine glycosylation is present at Asn87. The Charge relay system role is filled by Asp119. Intrachain disulfides connect Cys153–Cys220, Cys184–Cys200, and Cys210–Cys240. The active-site Charge relay system is Ser214.

It belongs to the peptidase S1 family. Elastase subfamily. The cofactor is Ca(2+).

Its subcellular location is the secreted. The enzyme catalyses Hydrolysis of proteins, including elastin. Preferential cleavage: Ala-|-Xaa.. Serine proteases that hydrolyze many proteins in addition to elastin. The chain is Chymotrypsin-like elastase family member 1 (Cela1) from Mus musculus (Mouse).